The following is a 177-amino-acid chain: AVDFGEAIWNPASSSNYSTASNQTSAVIMHTMEGSYAGSISWFQNPSAQVSAHYLIRKSDGQITQMVREYHQAWHAKNHNYYTIGIEHDGRAADAGNWSAAMVNASARLTKSICARRGVNCASAWKGPGYDTFHLVPDSVRVKGHGMLSGNENRYDPGKYFPWSNYYNLINGGGGNP.

Positions Gln23 to Gly158 constitute an N-acetylmuramoyl-L-alanine amidase domain. Cys114 and Cys121 form a disulfide bridge.

It is found in the secreted. It carries out the reaction Hydrolyzes the link between N-acetylmuramoyl residues and L-amino acid residues in certain cell-wall glycopeptides.. In terms of biological role, antibacterial activity against Gram-positive bacteria M.luteus, S.aureus, E.faecalis and P.acidilactici and Gram-negative bacterium E.coli. The sequence is that of N-acetylmuramoyl-L-alanine amidase A (cwhA) from Achromobacter lyticus.